Reading from the N-terminus, the 164-residue chain is UPF0304 protein PM1500 (164 aa).

This sequence belongs to the UPF0304 family.

In Pasteurella multocida (strain Pm70), this protein is UPF0304 protein PM1500.